Here is a 272-residue protein sequence, read N- to C-terminus: Phosphatidylglycerol--prolipoprotein diacylglyceryl transferase (272 aa).

A run of 7 helical transmembrane segments spans residues 17–37 (LQVHWYGLMYLLAFLCAWGLA), 55–75 (LVFYGALGVVLGGRIGYVLFY), 90–110 (VWTGGMSFHGGFLGVMIAMLF), 125–145 (FIAPCVPTGLMFGRIGNFIGG), 174–194 (PSQIYQALCEGLLLFIILWWF), 202–222 (MAVSALFLMGYGVARFVMEFF), and 230–250 (GFILFGWMTKGQILTVPMLLI). R138 lines the a 1,2-diacyl-sn-glycero-3-phospho-(1'-sn-glycerol) pocket.

Belongs to the Lgt family.

It localises to the cell inner membrane. The catalysed reaction is L-cysteinyl-[prolipoprotein] + a 1,2-diacyl-sn-glycero-3-phospho-(1'-sn-glycerol) = an S-1,2-diacyl-sn-glyceryl-L-cysteinyl-[prolipoprotein] + sn-glycerol 1-phosphate + H(+). The protein operates within protein modification; lipoprotein biosynthesis (diacylglyceryl transfer). Functionally, catalyzes the transfer of the diacylglyceryl group from phosphatidylglycerol to the sulfhydryl group of the N-terminal cysteine of a prolipoprotein, the first step in the formation of mature lipoproteins. The sequence is that of Phosphatidylglycerol--prolipoprotein diacylglyceryl transferase from Acinetobacter baumannii (strain ACICU).